The primary structure comprises 209 residues: Uracil phosphoribosyltransferase (209 aa).

5-phospho-alpha-D-ribose 1-diphosphate contacts are provided by residues arginine 79, arginine 104, and 131 to 139 (DPMLATGNS). Residues isoleucine 194 and 199-201 (GDA) contribute to the uracil site. Residue aspartate 200 coordinates 5-phospho-alpha-D-ribose 1-diphosphate.

The protein belongs to the UPRTase family. The cofactor is Mg(2+).

The enzyme catalyses UMP + diphosphate = 5-phospho-alpha-D-ribose 1-diphosphate + uracil. It participates in pyrimidine metabolism; UMP biosynthesis via salvage pathway; UMP from uracil: step 1/1. Allosterically activated by GTP. In terms of biological role, catalyzes the conversion of uracil and 5-phospho-alpha-D-ribose 1-diphosphate (PRPP) to UMP and diphosphate. This chain is Uracil phosphoribosyltransferase, found in Acidovorax sp. (strain JS42).